The chain runs to 608 residues: uncharacterized protein (608 aa).

The segment at 1–21 (MHTNSPLRADNQDLETQPLLR) is disordered. T24 carries the phosphothreonine modification. Position 27 is a phosphoserine (S27). The chain crosses the membrane as a helical span at residues 55-75 (IIYLLGIVLLSFFGVSIVQYI). N-linked (GlcNAc...) asparagine glycans are attached at residues N115, N141, N169, N407, N425, N449, N453, N527, and N580.

The protein resides in the membrane. This is an uncharacterized protein from Saccharomyces cerevisiae (strain ATCC 204508 / S288c) (Baker's yeast).